The following is a 200-amino-acid chain: Recombination protein RecR (200 aa).

The C4-type zinc finger occupies 59 to 74 (CEVCGNVCESSPCTIC). In terms of domain architecture, Toprim spans 82-177 (GTICVVEEPK…KVTRLASGLP (96 aa)).

It belongs to the RecR family.

May play a role in DNA repair. It seems to be involved in an RecBC-independent recombinational process of DNA repair. It may act with RecF and RecO. The polypeptide is Recombination protein RecR (Bifidobacterium animalis subsp. lactis (strain AD011)).